The chain runs to 201 residues: uncharacterized protein (201 aa).

It belongs to the mimivirus L885/R898 family.

This is an uncharacterized protein from Acanthamoeba polyphaga (Amoeba).